We begin with the raw amino-acid sequence, 1065 residues long: DNA-directed RNA polymerase subunit beta (1065 aa).

This sequence belongs to the RNA polymerase beta chain family. As to quaternary structure, in plastids the minimal PEP RNA polymerase catalytic core is composed of four subunits: alpha, beta, beta', and beta''. When a (nuclear-encoded) sigma factor is associated with the core the holoenzyme is formed, which can initiate transcription.

It localises to the plastid. It is found in the chloroplast. The catalysed reaction is RNA(n) + a ribonucleoside 5'-triphosphate = RNA(n+1) + diphosphate. Its function is as follows. DNA-dependent RNA polymerase catalyzes the transcription of DNA into RNA using the four ribonucleoside triphosphates as substrates. The polypeptide is DNA-directed RNA polymerase subunit beta (Marchantia polymorpha (Common liverwort)).